Consider the following 465-residue polypeptide: Deoxyguanosinetriphosphate triphosphohydrolase-like protein (465 aa).

The disordered stretch occupies residues 1-22 (MKWDKLLNDKRRRESGVTRSKN). The region spanning 63 to 252 (RLTHSMEVST…LEVADDIAYL (190 aa)) is the HD domain.

Belongs to the dGTPase family. Type 3 subfamily.

The protein is Deoxyguanosinetriphosphate triphosphohydrolase-like protein of Listeria monocytogenes serovar 1/2a (strain ATCC BAA-679 / EGD-e).